The primary structure comprises 162 residues: Nucleotide-binding protein Mpe_A3039 (162 aa).

The protein belongs to the YajQ family.

Its function is as follows. Nucleotide-binding protein. In Methylibium petroleiphilum (strain ATCC BAA-1232 / LMG 22953 / PM1), this protein is Nucleotide-binding protein Mpe_A3039.